A 698-amino-acid chain; its full sequence is Ubiquitin-like modifier-activating enzyme ATG7 (698 aa).

The FAP motif motif lies at 11–13; it reads FAP. A Glycyl lysine isopeptide (Lys-Gly) (interchain with G-Cter in ubiquitin) cross-link involves residue lysine 41. Catalysis depends on cysteine 567, which acts as the Glycyl thioester intermediate. Serine 693 carries the post-translational modification Phosphoserine.

The protein belongs to the ATG7 family. Homodimer. Interacts with ATG3; this interaction is essential for the transfer of ATG8-like proteins's thioester from ATG7 to ATG3 and plays a role in the conjugation of ATG12 to ATG5. Interacts with ATG12. Forms intermediate conjugates with GABARAPL1. Forms intermediate conjugates with ATG8-like proteins such as GABARAP, GABARAPL2 or MAP1LC3A. Interacts with EP300 acetyltransferase. Interacts with FOXO1. In terms of processing, acetylated by EP300. Post-translationally, polyubiquitinated on Lys-41 via 'Lys-63'-linked ubiquitin by TRIM32; this modification positiely regulates ATG8 and ATG12 activating enzyme activity leading to initiation of autophagy under metabolic stress. Widely expressed.

Its subcellular location is the cytoplasm. It localises to the preautophagosomal structure. E1-like activating enzyme involved in the 2 ubiquitin-like systems required for cytoplasm to vacuole transport (Cvt) and autophagy. Activates ATG12 for its conjugation with ATG5 as well as the ATG8 family proteins for their conjugation with phosphatidylethanolamine. Both systems are needed for the ATG8 association to Cvt vesicles and autophagosomes membranes. Required for autophagic death induced by caspase-8 inhibition. Facilitates LC3-I lipidation with phosphatidylethanolamine to form LC3-II which is found on autophagosomal membranes. Required for mitophagy which contributes to regulate mitochondrial quantity and quality by eliminating the mitochondria to a basal level to fulfill cellular energy requirements and preventing excess ROS production. Modulates p53/TP53 activity to regulate cell cycle and survival during metabolic stress. Also plays a key role in the maintenance of axonal homeostasis, the prevention of axonal degeneration, the maintenance of hematopoietic stem cells, the formation of Paneth cell granules, as well as in adipose differentiation. Plays a role in regulating the liver clock and glucose metabolism by mediating the autophagic degradation of CRY1 (clock repressor) in a time-dependent manner. The chain is Ubiquitin-like modifier-activating enzyme ATG7 from Rattus norvegicus (Rat).